Here is a 392-residue protein sequence, read N- to C-terminus: Protein FAM53C (392 aa).

Met1 bears the N-acetylmethionine mark. The disordered stretch occupies residues 77 to 120 (HLRPPSRGSSPKEQPLSQVLRPEPPDPEKLPVPPAPPSKRHCRS). Positions 83-93 (RGSSPKEQPLS) are enriched in polar residues. Phosphoserine occurs at positions 122 and 162. Disordered stretches follow at residues 141–167 (LWTPIKHRGSGGGGGPQVPHQSPPKRV), 203–303 (SRPC…LDFD), and 340–364 (SASCSPTGGSSQVLSESEEEEEGAV). Residues 203–215 (SRPCATSPQSGSW) show a composition bias toward polar residues. Residues Ser232, Ser234, Ser255, Ser273, and Ser299 each carry the phosphoserine modification. A compositionally biased stretch (low complexity) spans 241–256 (ASRFLPSARSSPASSP). Over residues 278 to 303 (LDARKTGVKRRHEEDPRRLRPSLDFD) the composition is skewed to basic and acidic residues.

This sequence belongs to the FAM53 family.

The protein is Protein FAM53C of Pongo abelii (Sumatran orangutan).